A 300-amino-acid chain; its full sequence is Probable mitochondrial 2-oxodicarboxylate carrier (300 aa).

Residues 1–20 (MTSKGNAGNPPTPTPAPVKS) form a disordered region. Solcar repeat units follow at residues 21–104 (QPLW…YEKQ), 114–200 (PTQM…IKSA), and 209–295 (GVLV…VMKL). The next 6 helical transmembrane spans lie at 27 to 47 (LVSG…LDVV), 74 to 93 (LKMY…KRAI), 120 to 140 (IGSG…FELV), 171 to 191 (GFFK…GGYF), 209 to 229 (GVLV…TMLN), and 278 to 298 (LGPG…LLAG).

This sequence belongs to the mitochondrial carrier (TC 2.A.29) family.

The protein localises to the mitochondrion inner membrane. The catalysed reaction is 2-oxoadipate(in) + 2-oxoglutarate(out) = 2-oxoadipate(out) + 2-oxoglutarate(in). The enzyme catalyses hexanedioate(in) + 2-oxoglutarate(out) = hexanedioate(out) + 2-oxoglutarate(in). It catalyses the reaction L-2-aminoadipate(in) + 2-oxoglutarate(out) = L-2-aminoadipate(out) + 2-oxoglutarate(in). It carries out the reaction glutarate(in) + 2-oxoglutarate(out) = glutarate(out) + 2-oxoglutarate(in). The catalysed reaction is 2-oxoheptanedioate(in) + 2-oxoglutarate(out) = 2-oxoheptanedioate(out) + 2-oxoglutarate(in). The enzyme catalyses heptanedioate(in) + 2-oxoglutarate(out) = heptanedioate(out) + 2-oxoglutarate(in). It catalyses the reaction citrate(in) + 2-oxoglutarate(out) = citrate(out) + 2-oxoglutarate(in). In terms of biological role, transports dicarboxylates across the inner membranes of mitochondria by a counter-exchange mechanism. Can transport 2-oxoadipate (2-oxohexanedioate), 2-oxoglutarate, adipate (hexanedioate), glutarate, and to a lesser extent, pimelate (heptanedioate), 2-oxopimelate (2-oxoheptanedioate), 2-aminoadipate (2-aminohexanedioate), oxaloacetate, and citrate. Plays a central role in catabolism of lysine, hydroxylysine, and tryptophan, by transporting common metabolite intermediates (such as 2-oxoadipate) into the mitochondria, where it is converted into acetyl-CoA and can enter the citric acid (TCA) cycle. The polypeptide is Probable mitochondrial 2-oxodicarboxylate carrier (mcfT) (Dictyostelium discoideum (Social amoeba)).